Consider the following 109-residue polypeptide: Non-structural protein NS-S (109 aa).

This sequence belongs to the orthobunyavirus NS-S protein family.

Functionally, inhibits host transcriptional machinery, by producing modifications to the phosphorylation state of the C-terminal domain (CTD) of RNA polymerase II. Inhibits phosphorylation at serine 2 in the heptapeptide repeat (YSPTSPS) of the CTD of RNA polymerase II, suggesting that the elongation step of transcription and/or 3'-end processing is prevented. Inhibition of host transcription machinery leads to shut off of host cell protein synthesis and inhibition of the host innate immune response. NSs also seems to be involved in the nuclear relocalization of host PABP1. This Culex protein is Non-structural protein NS-S (N).